The chain runs to 497 residues: Pancreatic alpha-amylase (497 aa).

Gln-1 carries the pyrrolidone carboxylic acid modification. 3 cysteine pairs are disulfide-bonded: Cys-28/Cys-86, Cys-70/Cys-115, and Cys-141/Cys-160. Residues Asn-100, Arg-158, and Asp-167 each contribute to the Ca(2+) site. Residue Arg-195 coordinates chloride. Asp-197 serves as the catalytic Nucleophile. Ca(2+) is bound at residue His-201. Glu-233 serves as the catalytic Proton donor. Chloride is bound by residues Asn-298 and Arg-337. Intrachain disulfides connect Cys-379-Cys-385 and Cys-451-Cys-463.

It belongs to the glycosyl hydrolase 13 family. Monomer. Ca(2+) is required as a cofactor. Chloride serves as cofactor.

The protein resides in the secreted. It localises to the extracellular space. It carries out the reaction Endohydrolysis of (1-&gt;4)-alpha-D-glucosidic linkages in polysaccharides containing three or more (1-&gt;4)-alpha-linked D-glucose units.. This Struthio camelus (Common ostrich) protein is Pancreatic alpha-amylase.